Here is a 144-residue protein sequence, read N- to C-terminus: Large ribosomal subunit protein uL15 (144 aa).

The interval 20–49 is disordered; that stretch reads GRGIGSGLGKTGGRGHKGQKSRSGGFHKVG. Residues 21 to 31 show a composition bias toward gly residues; the sequence is RGIGSGLGKTG.

Belongs to the universal ribosomal protein uL15 family. As to quaternary structure, part of the 50S ribosomal subunit.

Functionally, binds to the 23S rRNA. The sequence is that of Large ribosomal subunit protein uL15 from Neisseria gonorrhoeae (strain ATCC 700825 / FA 1090).